We begin with the raw amino-acid sequence, 194 residues long: Oligoribonuclease (194 aa).

One can recognise an Exonuclease domain in the interval 11–174 (LIWIDLEMTG…SDVRDSIDEL (164 aa)). Residue Y132 is part of the active site.

It belongs to the oligoribonuclease family.

The protein localises to the cytoplasm. Functionally, 3'-to-5' exoribonuclease specific for small oligoribonucleotides. The polypeptide is Oligoribonuclease (Xanthomonas euvesicatoria pv. vesicatoria (strain 85-10) (Xanthomonas campestris pv. vesicatoria)).